The following is a 310-amino-acid chain: Ribonuclease Z (310 aa).

The Zn(2+) site is built by His60, His62, Asp64, His65, His140, Asp209, and His269. Residue Asp64 is the Proton acceptor of the active site.

The protein belongs to the RNase Z family. In terms of assembly, homodimer. Requires Zn(2+) as cofactor.

It catalyses the reaction Endonucleolytic cleavage of RNA, removing extra 3' nucleotides from tRNA precursor, generating 3' termini of tRNAs. A 3'-hydroxy group is left at the tRNA terminus and a 5'-phosphoryl group is left at the trailer molecule.. Functionally, zinc phosphodiesterase, which displays some tRNA 3'-processing endonuclease activity. Probably involved in tRNA maturation, by removing a 3'-trailer from precursor tRNA. The polypeptide is Ribonuclease Z (Methanococcus maripaludis (strain C7 / ATCC BAA-1331)).